The following is a 1020-amino-acid chain: RNA-binding protein 44 (1020 aa).

Disordered regions lie at residues Met1–Gln23 and Asp50–Val70. A compositionally biased stretch (basic and acidic residues) spans Thr58 to Val70. 6 positions are modified to phosphoserine: Ser249, Ser371, Ser374, Ser516, Ser683, and Ser690. One can recognise an RRM domain in the interval Phe796–Ile870.

Homodimer. Interacts with TEX14.

The protein resides in the cytoplasm. Component of intercellular bridges during meiosis. Intercellular bridges are evolutionarily conserved structures that connect differentiating germ cells. Not required for fertility. The protein is RNA-binding protein 44 (Rbm44) of Rattus norvegicus (Rat).